The primary structure comprises 119 residues: uncharacterized protein (119 aa).

The segment at S64–N119 is disordered. A compositionally biased stretch (polar residues) spans P95 to V104.

This is an uncharacterized protein from Nostoc sp. (strain PCC 7120 / SAG 25.82 / UTEX 2576).